Consider the following 503-residue polypeptide: Catalase (503 aa).

An N-terminal signal peptide occupies residues 1–21; sequence MHMSKSFLIISMGFVAVSVQA. Active-site residues include H72 and N145. Y353 is a binding site for heme.

This sequence belongs to the catalase family. Requires heme as cofactor.

It is found in the periplasm. The catalysed reaction is 2 H2O2 = O2 + 2 H2O. In terms of biological role, decomposes hydrogen peroxide into water and oxygen; serves to protect cells from the toxic effects of hydrogen peroxide. The chain is Catalase from Vibrio cholerae serotype O1 (strain ATCC 39315 / El Tor Inaba N16961).